The sequence spans 332 residues: Flotillin-like protein FloA (332 aa).

Transmembrane regions (helical) follow at residues 6–26 (LGYL…FSFV) and 28–48 (VGLW…YMIG).

This sequence belongs to the flotillin-like FloA family. Homooligomerizes.

It localises to the cell membrane. The protein resides in the membrane raft. Found in functional membrane microdomains (FMM) that may be equivalent to eukaryotic membrane rafts. FMMs are highly dynamic and increase in number as cells age. Flotillins are thought to be important factors in membrane fluidity. This Symbiobacterium thermophilum (strain DSM 24528 / JCM 14929 / IAM 14863 / T) protein is Flotillin-like protein FloA.